A 426-amino-acid polypeptide reads, in one-letter code: Serine--tRNA ligase (426 aa).

An L-serine-binding site is contributed by 233–235 (TAE). 264-266 (RSE) contributes to the ATP binding site. Glutamate 287 contacts L-serine. 351–354 (EISS) lines the ATP pocket. Serine 387 is a binding site for L-serine.

The protein belongs to the class-II aminoacyl-tRNA synthetase family. Type-1 seryl-tRNA synthetase subfamily. In terms of assembly, homodimer. The tRNA molecule binds across the dimer.

The protein localises to the cytoplasm. The catalysed reaction is tRNA(Ser) + L-serine + ATP = L-seryl-tRNA(Ser) + AMP + diphosphate + H(+). The enzyme catalyses tRNA(Sec) + L-serine + ATP = L-seryl-tRNA(Sec) + AMP + diphosphate + H(+). It functions in the pathway aminoacyl-tRNA biosynthesis; selenocysteinyl-tRNA(Sec) biosynthesis; L-seryl-tRNA(Sec) from L-serine and tRNA(Sec): step 1/1. Functionally, catalyzes the attachment of serine to tRNA(Ser). Is also able to aminoacylate tRNA(Sec) with serine, to form the misacylated tRNA L-seryl-tRNA(Sec), which will be further converted into selenocysteinyl-tRNA(Sec). The chain is Serine--tRNA ligase from Azotobacter vinelandii (strain DJ / ATCC BAA-1303).